A 315-amino-acid chain; its full sequence is Taste receptor type 2 member 3 (315 aa).

The Extracellular portion of the chain corresponds to Met-1–Asp-5. The chain crosses the membrane as a helical span at residues Gly-6–Ile-26. Over Gly-27–Ser-41 the chain is Cytoplasmic. Residues Leu-42 to Leu-62 traverse the membrane as a helical segment. Residues Thr-63–His-93 lie on the Extracellular side of the membrane. A helical membrane pass occupies residues Leu-94–Ser-114. Over His-115–Arg-127 the chain is Cytoplasmic. The helical transmembrane segment at Val-128–Ile-148 threads the bilayer. Topologically, residues Asn-149 to Thr-185 are extracellular. Asn-165 is a glycosylation site (N-linked (GlcNAc...) asparagine). The helical transmembrane segment at Leu-186–Leu-206 threads the bilayer. Residues Gly-207–Arg-233 are Cytoplasmic-facing. The chain crosses the membrane as a helical span at residues Ile-234–Phe-254. The Extracellular portion of the chain corresponds to Gly-255 to Lys-265. Residues Met-266–Gly-286 traverse the membrane as a helical segment. The Cytoplasmic segment spans residues Asn-287–Ser-315.

The protein belongs to the G-protein coupled receptor T2R family.

It localises to the membrane. Functionally, gustducin-coupled receptor implicated in the perception of bitter compounds in the oral cavity and the gastrointestinal tract. Signals through PLCB2 and the calcium-regulated cation channel TRPM5. The chain is Taste receptor type 2 member 3 (TAS2R3) from Papio hamadryas (Hamadryas baboon).